A 92-amino-acid polypeptide reads, in one-letter code: Progonadoliberin-1 (92 aa).

The N-terminal stretch at 1 to 23 (METIPKLMAAVVLLTVCLEGCSS) is a signal peptide. Pyrrolidone carboxylic acid is present on Gln24. Gly33 bears the Glycine amide mark.

It belongs to the GnRH family. The precursor is cleaved by ACE, which removes the Gly-Lys-Arg peptide at the C-terminus, leading to mature hormone. The mature form of Gonadoliberin-1 is also cleaved and degraded by ACE. As to expression, central nervous system.

The protein localises to the secreted. Functionally, stimulates the secretion of gonadotropins; it stimulates the secretion of both luteinizing and follicle-stimulating hormones. This Rattus norvegicus (Rat) protein is Progonadoliberin-1 (Gnrh1).